A 227-amino-acid polypeptide reads, in one-letter code: Cytochrome c oxidase subunit 2 (227 aa).

Over Met-1–Ser-14 the chain is Mitochondrial intermembrane. The helical transmembrane segment at Pro-15–Met-45 threads the bilayer. At Leu-46–Gln-59 the chain is on the mitochondrial matrix side. The helical transmembrane segment at Glu-60–Met-87 threads the bilayer. The Mitochondrial intermembrane segment spans residues Asp-88–Ala-227. Residues His-161, Cys-196, Glu-198, Cys-200, His-204, and Met-207 each contribute to the Cu cation site. Glu-198 lines the Mg(2+) pocket. Residue Tyr-218 is modified to Phosphotyrosine.

This sequence belongs to the cytochrome c oxidase subunit 2 family. In terms of assembly, component of the cytochrome c oxidase (complex IV, CIV), a multisubunit enzyme composed of 14 subunits. The complex is composed of a catalytic core of 3 subunits MT-CO1, MT-CO2 and MT-CO3, encoded in the mitochondrial DNA, and 11 supernumerary subunits COX4I, COX5A, COX5B, COX6A, COX6B, COX6C, COX7A, COX7B, COX7C, COX8 and NDUFA4, which are encoded in the nuclear genome. The complex exists as a monomer or a dimer and forms supercomplexes (SCs) in the inner mitochondrial membrane with NADH-ubiquinone oxidoreductase (complex I, CI) and ubiquinol-cytochrome c oxidoreductase (cytochrome b-c1 complex, complex III, CIII), resulting in different assemblies (supercomplex SCI(1)III(2)IV(1) and megacomplex MCI(2)III(2)IV(2)). Found in a complex with TMEM177, COA6, COX18, COX20, SCO1 and SCO2. Interacts with TMEM177 in a COX20-dependent manner. Interacts with COX20. Interacts with COX16. It depends on Cu cation as a cofactor.

Its subcellular location is the mitochondrion inner membrane. The enzyme catalyses 4 Fe(II)-[cytochrome c] + O2 + 8 H(+)(in) = 4 Fe(III)-[cytochrome c] + 2 H2O + 4 H(+)(out). Functionally, component of the cytochrome c oxidase, the last enzyme in the mitochondrial electron transport chain which drives oxidative phosphorylation. The respiratory chain contains 3 multisubunit complexes succinate dehydrogenase (complex II, CII), ubiquinol-cytochrome c oxidoreductase (cytochrome b-c1 complex, complex III, CIII) and cytochrome c oxidase (complex IV, CIV), that cooperate to transfer electrons derived from NADH and succinate to molecular oxygen, creating an electrochemical gradient over the inner membrane that drives transmembrane transport and the ATP synthase. Cytochrome c oxidase is the component of the respiratory chain that catalyzes the reduction of oxygen to water. Electrons originating from reduced cytochrome c in the intermembrane space (IMS) are transferred via the dinuclear copper A center (CU(A)) of subunit 2 and heme A of subunit 1 to the active site in subunit 1, a binuclear center (BNC) formed by heme A3 and copper B (CU(B)). The BNC reduces molecular oxygen to 2 water molecules using 4 electrons from cytochrome c in the IMS and 4 protons from the mitochondrial matrix. The chain is Cytochrome c oxidase subunit 2 (MT-CO2) from Elephas maximus (Indian elephant).